Here is a 188-residue protein sequence, read N- to C-terminus: Large ribosomal subunit protein eL18 (188 aa).

Residue Lys119 forms a Glycyl lysine isopeptide (Lys-Gly) (interchain with G-Cter in SUMO2) linkage. A Phosphoserine modification is found at Ser130. A disordered region spans residues 150-188 (RHFGKAPRTPHSHTKPYVRSKGRKFERARGRWASRGYKN). Composition is skewed to basic residues over residues 151 to 171 (HFGK…RSKG) and 179 to 188 (GRWASRGYKN). Position 158 is a phosphothreonine (Thr158). A Glycyl lysine isopeptide (Lys-Gly) (interchain with G-Cter in SUMO2) cross-link involves residue Lys164.

The protein belongs to the eukaryotic ribosomal protein eL18 family. In terms of assembly, component of the large ribosomal subunit.

It is found in the cytoplasm. It localises to the cytosol. Its subcellular location is the rough endoplasmic reticulum. In terms of biological role, component of the large ribosomal subunit. The ribosome is a large ribonucleoprotein complex responsible for the synthesis of proteins in the cell. This chain is Large ribosomal subunit protein eL18 (RPL18), found in Oryctolagus cuniculus (Rabbit).